The chain runs to 1552 residues: Nonribosomal peptide synthetase acrB (1552 aa).

The tract at residues 129–564 (ASFAQERIWF…PVANLAIFDE (436 aa)) is condensation. Residues 594–999 (RHCKAHPRDV…RMEGSAQVKI (406 aa)) are adenylation. The 77-residue stretch at 1110–1186 (APLGVEEEVM…AMARLLQPQE (77 aa)) folds into the Carrier domain. Ser-1146 is modified (O-(pantetheine 4'-phosphoryl)serine). The segment at 1226–1464 (LTGATGFLGR…DFVGVDAVAS (239 aa)) is thiolester reductase (R) domain.

It belongs to the NRP synthetase family.

It participates in secondary metabolite biosynthesis. In terms of biological role, nonribosomal peptide synthetase; part of the cluster that mediates the biosynthesis of acurin A, a highly reduced polyketide coupled to a serine via a peptide bond. The activities of the highly reducing polyketide synthase acrA and the nonribosomal peptide synthetase acrB are collectively responsible for the synthesis of the acurin A core structure with a heptaketide backbone produced by acrA covalently fused to a L-serine by acrB. After the formation of the PK-NRP hybrid product, it is detached from acrB by reductive release to set up the formation of the lactam ring by aldol condensation. The hydrolyase acrC then catalyzes water loss to generate a double bond in the ring. This double bond is probably reduced, which is followed by three oxidations at C-22 to generate the carboxylic acid moiety, involving probably the FAD-binding monooxygenase acrE and the cytochrome P450 monooxygenases acrD and acrF. Finally, a last methylation step performed by the O-methyltransferase acrG leads to the production of acurin A. The polypeptide is Nonribosomal peptide synthetase acrB (Aspergillus aculeatus (strain ATCC 16872 / CBS 172.66 / WB 5094)).